We begin with the raw amino-acid sequence, 348 residues long: Probable tRNA pseudouridine synthase B (348 aa).

Asp93 acts as the Nucleophile in catalysis. Residues 260–335 form the PUA domain; sequence LKKIYILDSA…IAVDIERVFM (76 aa).

It belongs to the pseudouridine synthase TruB family. Type 2 subfamily.

It catalyses the reaction uridine(55) in tRNA = pseudouridine(55) in tRNA. Its function is as follows. Could be responsible for synthesis of pseudouridine from uracil-55 in the psi GC loop of transfer RNAs. This Nanoarchaeum equitans (strain Kin4-M) protein is Probable tRNA pseudouridine synthase B.